The primary structure comprises 315 residues: Protoheme IX farnesyltransferase (315 aa).

A run of 9 helical transmembrane segments spans residues 21–41, 52–74, 98–118, 121–141, 150–170, 177–197, 223–243, 246–266, and 284–304; these read YFALLKPRVMSLVVFTALVGL, VGFCAILFIAVGAGASGALNMWW, GEALALGLGLSGLSVVMLALA, LLAAGLLAFTIFFYAVVYSMW, IVIGGAAGAFPPMIGWVAATG, VLMFALIFMWTPPHFWALALF, ILVYTVLLVPVALGLALTPVA, LYLATALVLNAIFLKGAWDIW, and FFKFSLLYLALHFTALLAEAI.

Belongs to the UbiA prenyltransferase family. Protoheme IX farnesyltransferase subfamily. As to quaternary structure, interacts with CtaA.

It localises to the cell inner membrane. It carries out the reaction heme b + (2E,6E)-farnesyl diphosphate + H2O = Fe(II)-heme o + diphosphate. The protein operates within porphyrin-containing compound metabolism; heme O biosynthesis; heme O from protoheme: step 1/1. In terms of biological role, converts heme B (protoheme IX) to heme O by substitution of the vinyl group on carbon 2 of heme B porphyrin ring with a hydroxyethyl farnesyl side group. The sequence is that of Protoheme IX farnesyltransferase from Dinoroseobacter shibae (strain DSM 16493 / NCIMB 14021 / DFL 12).